A 580-amino-acid chain; its full sequence is Rap guanine nucleotide exchange factor 5 (580 aa).

Residues 68 to 201 enclose the N-terminal Ras-GEF domain; that stretch reads DRYVVVSGTP…ELKEFQKILG (134 aa). The region spanning 345-579 is the Ras-GEF domain; it reads NTWDLALELM…FELSHRIEPR (235 aa).

As to expression, widely expressed with highest levels in brain.

It localises to the nucleus. In terms of biological role, guanine nucleotide exchange factor (GEF) for RAP1A, RAP2A and MRAS/M-Ras-GTP. Its association with MRAS inhibits Rap1 activation. This chain is Rap guanine nucleotide exchange factor 5 (RAPGEF5), found in Homo sapiens (Human).